The primary structure comprises 297 residues: Acetylglutamate kinase (297 aa).

Residues 73–74 (GG), arginine 95, and asparagine 188 contribute to the substrate site.

Belongs to the acetylglutamate kinase family. ArgB subfamily.

The protein resides in the cytoplasm. It carries out the reaction N-acetyl-L-glutamate + ATP = N-acetyl-L-glutamyl 5-phosphate + ADP. The protein operates within amino-acid biosynthesis; L-arginine biosynthesis; N(2)-acetyl-L-ornithine from L-glutamate: step 2/4. Catalyzes the ATP-dependent phosphorylation of N-acetyl-L-glutamate. This chain is Acetylglutamate kinase, found in Nostoc sp. (strain PCC 7120 / SAG 25.82 / UTEX 2576).